A 462-amino-acid chain; its full sequence is Elongation factor 1-alpha, somatic form (462 aa).

Residue Gly-2 is modified to N,N,N-trimethylglycine. The 238-residue stretch at 5–242 folds into the tr-type G domain; it reads KTHINIVVIG…DCILPPSRPT (238 aa). Residues 14–21 are G1; it reads GHVDSGKS. Position 14 to 21 (14 to 21) interacts with GTP; sequence GHVDSGKS. The segment at 70 to 74 is G2; that stretch reads GITID. The G3 stretch occupies residues 91-94; sequence DAPG. GTP-binding positions include 91–95 and 153–156; these read DAPGH and NKMD. Residues 153–156 form a G4 region; the sequence is NKMD. The G5 stretch occupies residues 194–196; sequence SGW. Glu-301 and Glu-374 each carry 5-glutamyl glycerylphosphorylethanolamine.

The protein belongs to the TRAFAC class translation factor GTPase superfamily. Classic translation factor GTPase family. EF-Tu/EF-1A subfamily.

It localises to the cytoplasm. This protein promotes the GTP-dependent binding of aminoacyl-tRNA to the A-site of ribosomes during protein biosynthesis. The sequence is that of Elongation factor 1-alpha, somatic form (eef1as) from Xenopus laevis (African clawed frog).